Consider the following 504-residue polypeptide: Maturase K (504 aa).

The protein belongs to the intron maturase 2 family. MatK subfamily.

It localises to the plastid. The protein resides in the chloroplast. Usually encoded in the trnK tRNA gene intron. Probably assists in splicing its own and other chloroplast group II introns. In Vigna unguiculata (Cowpea), this protein is Maturase K.